The sequence spans 200 residues: Inducible T-cell costimulator (200 aa).

The signal sequence occupies residues 1–20 (MKPYFSCVFVFCFLIKLLTG). The Extracellular segment spans residues 21–145 (ELNDLANHRM…LCCQLKLWLP (125 aa)). The region spanning 30–133 (MFSFHDGGVQ…LSGGYLLIYE (104 aa)) is the Ig-like V-type domain. 2 cysteine pairs are disulfide-bonded: Cys-42/Cys-109 and Cys-63/Cys-83. 2 N-linked (GlcNAc...) asparagine glycosylation sites follow: Asn-89 and Asn-123. The chain crosses the membrane as a helical span at residues 146-166 (VGCAAFVAALLFGCIFIVWFA). Residues 167-200 (KKKYRSSVHDPNSEYMFMAAVNTNKKSRLAGMTS) lie on the Cytoplasmic side of the membrane.

In terms of assembly, homodimer; disulfide-linked. Interacts with ICOSLG. Interacts with PIK3R1. Interacts with TBK1; this interaction is critical for the maturation of T follicular regulatory cells. N-glycosylated. Strongly expressed in the spleen and lung. Lower expression seen in liver, kidney and testis.

The protein resides in the cell membrane. Functionally, stimulatory receptor expressed in activated or antigen-experienced T-cells that plays an important role in the immune response. Upon binding to its ligand ICOSL expressed on antigen presenting cells (APCs), delivers costimulatory signals that enhances all basic T-cell responses to a foreign antigen, namely proliferation, secretion of lymphokines including IL10, up-regulation of molecules that mediate cell-cell interaction, and effective help for antibody secretion by B-cells. Also acts as a costimulatory receptor critical for the differentiation of T follicular regulatory cells upon immune challenges such as viral infection. Mechanistically, potentiates TCR-induced calcium flux by augmenting PLCG1 activation and actin remodeling. In addition, activates PI3K signaling pathways independently of calcium flux. Essential both for efficient interaction between T and B-cells and for normal antibody responses to T-cell dependent antigens. Prevents the apoptosis of pre-activated T-cells. Plays a critical role in CD40-mediated class switching of immunoglobin isotypes. In Rattus norvegicus (Rat), this protein is Inducible T-cell costimulator (Icos).